Here is a 232-residue protein sequence, read N- to C-terminus: Cytidylate kinase (232 aa).

15–23 (GPAGAGKST) contributes to the ATP binding site. The interval 164-192 (KEDPPPISQGQLAAEMKERDMRDSTRADA) is disordered. Over residues 178–189 (EMKERDMRDSTR) the composition is skewed to basic and acidic residues.

It belongs to the cytidylate kinase family. Type 1 subfamily.

The protein localises to the cytoplasm. The catalysed reaction is CMP + ATP = CDP + ADP. The enzyme catalyses dCMP + ATP = dCDP + ADP. In Solibacter usitatus (strain Ellin6076), this protein is Cytidylate kinase.